Consider the following 382-residue polypeptide: tRNA (guanine(26)-N(2))-dimethyltransferase (382 aa).

Residues 4–373 (VEIIEGKARI…KNLDEIKECI (370 aa)) form the Trm1 methyltransferase domain. Residues Arg-44, Arg-69, and Asp-87 each contribute to the S-adenosyl-L-methionine site. Residues Cys-246, Cys-249, Cys-263, and Cys-266 each contribute to the Zn(2+) site.

The protein belongs to the class I-like SAM-binding methyltransferase superfamily. Trm1 family.

It catalyses the reaction guanosine(26) in tRNA + 2 S-adenosyl-L-methionine = N(2)-dimethylguanosine(26) in tRNA + 2 S-adenosyl-L-homocysteine + 2 H(+). Dimethylates a single guanine residue at position 26 of a number of tRNAs using S-adenosyl-L-methionine as donor of the methyl groups. This Sulfolobus acidocaldarius (strain ATCC 33909 / DSM 639 / JCM 8929 / NBRC 15157 / NCIMB 11770) protein is tRNA (guanine(26)-N(2))-dimethyltransferase.